The following is a 146-amino-acid chain: VELTAEEKAAVLALWDKVKEDEVGGEALGRLLVVYPWTQRFFDSFGDLSTPAAVMGNAKVKAHGKKVLHSFGDGVHHLDNLKGTFAALSELHCDKLHVDPENFRLLGNVLVVVLAKHFGKQFTPELQAAYQKVVAGVANALAHKYH.

An N-acetylvaline modification is found at valine 1. In terms of domain architecture, Globin spans 2–146; that stretch reads ELTAEEKAAV…VANALAHKYH (145 aa). A Phosphoserine modification is found at serine 44. Lysine 59 bears the N6-acetyllysine mark. Residue histidine 63 coordinates heme b. Lysine 82 bears the N6-acetyllysine mark. Position 92 (histidine 92) interacts with heme b. Cysteine 93 carries the post-translational modification S-nitrosocysteine. Position 144 is an N6-acetyllysine (lysine 144).

It belongs to the globin family. In terms of assembly, heterotetramer of two alpha chains and two beta chains. In terms of tissue distribution, red blood cells.

Its function is as follows. Involved in oxygen transport from the lung to the various peripheral tissues. The polypeptide is Hemoglobin subunit beta (HBB) (Ceratotherium simum (White rhinoceros)).